The following is a 125-amino-acid chain: Protein MGF 110-3L (125 aa).

Residues 1–6 (MLVIFL) are Cytoplasmic-facing. A helical transmembrane segment spans residues 7-27 (GILGLLANQVFGLPAKNAGHL). Residues 28-116 (YSTENPPEEE…VPHNRPHRLG (89 aa)) are Extracellular-facing. Asn64 carries N-linked (GlcNAc...) asparagine; by host glycosylation.

It belongs to the asfivirus MGF 110 family.

It localises to the host membrane. In terms of biological role, plays a role in virus cell tropism, and may be required for efficient virus replication in macrophages. In African swine fever virus (isolate Pig/Kenya/KEN-50/1950) (ASFV), this protein is Protein MGF 110-3L.